The sequence spans 597 residues: Centrosomal protein of 70 kDa (597 aa).

Positions 1–23 (MFPVAPKPQDSSQASDRLMTEKQ) are disordered. 2 coiled-coil regions span residues 66-179 (MRQN…QMEV) and 254-326 (TYKG…KKAE). Residues 483–516 (NGVYPRMNEVYTRLGEMNNAVRNLQELLELDSSS) form a TPR repeat.

In terms of assembly, directly interacts with tubulin-gamma; this interaction determines centrosomal localization.

The protein resides in the cytoplasm. It localises to the cytoskeleton. Its subcellular location is the microtubule organizing center. It is found in the centrosome. In terms of biological role, plays a role in the organization of both preexisting and nascent microtubules in interphase cells. During mitosis, required for the organization and orientation of the mitotic spindle. The protein is Centrosomal protein of 70 kDa (CEP70) of Pongo abelii (Sumatran orangutan).